The chain runs to 363 residues: Pyrimidine monooxygenase RutA (363 aa).

Residues 49–50 (IK), Asn115, Glu124, 140–141 (RY), and Ser190 each bind FMN.

Belongs to the NtaA/SnaA/DszA monooxygenase family. RutA subfamily.

The catalysed reaction is uracil + FMNH2 + NADH + O2 = (Z)-3-ureidoacrylate + FMN + NAD(+) + H2O + H(+). The enzyme catalyses thymine + FMNH2 + NADH + O2 = (Z)-2-methylureidoacrylate + FMN + NAD(+) + H2O + H(+). Catalyzes the pyrimidine ring opening between N-3 and C-4 by an unusual flavin hydroperoxide-catalyzed mechanism, adding oxygen atoms in the process to yield ureidoacrylate peracid, that immediately reacts with FMN forming ureidoacrylate and FMN-N(5)-oxide. The FMN-N(5)-oxide reacts spontaneously with NADH to produce FMN. Requires the flavin reductase RutF to regenerate FMN in vivo. The protein is Pyrimidine monooxygenase RutA of Escherichia coli O44:H18 (strain 042 / EAEC).